We begin with the raw amino-acid sequence, 697 residues long: uncharacterized protein (697 aa).

The next 5 helical transmembrane spans lie at 45–65 (LCAV…LALL), 86–106 (TVAA…MGVV), 128–148 (VVVS…GMLA), 198–218 (VLLG…WWAL), and 280–300 (HLAI…ILAG). ABC transporter domains follow at residues 251 to 473 (VRLD…QPQH) and 477 to 696 (LELV…AGGM). ATP-binding positions include 285 to 292 (GANGSGKT) and 514 to 521 (GGNGSGKS). A helical membrane pass occupies residues 522–542 (TLAWIMAGLTIPTTGACLLDG).

The protein belongs to the ABC transporter superfamily.

It localises to the cell membrane. This is an uncharacterized protein from Mycobacterium tuberculosis (strain CDC 1551 / Oshkosh).